The following is a 242-amino-acid chain: Anthranilate phosphoribosyltransferase (242 aa).

Residues G79, 82–83, T87, 89–92, 107–115, and S119 contribute to the 5-phospho-alpha-D-ribose 1-diphosphate site; these read GD, NVST, and KHGNRAVSS. Anthranilate is bound at residue G79. S91 lines the Mg(2+) pocket. An anthranilate-binding site is contributed by N110. R165 serves as a coordination point for anthranilate. The Mg(2+) site is built by D224 and E225.

The protein belongs to the anthranilate phosphoribosyltransferase family. As to quaternary structure, homodimer. Mg(2+) serves as cofactor.

The enzyme catalyses N-(5-phospho-beta-D-ribosyl)anthranilate + diphosphate = 5-phospho-alpha-D-ribose 1-diphosphate + anthranilate. It participates in amino-acid biosynthesis; L-tryptophan biosynthesis; L-tryptophan from chorismate: step 2/5. Functionally, catalyzes the transfer of the phosphoribosyl group of 5-phosphorylribose-1-pyrophosphate (PRPP) to anthranilate to yield N-(5'-phosphoribosyl)-anthranilate (PRA). This chain is Anthranilate phosphoribosyltransferase (trpD), found in Bacillus caldotenax.